The sequence spans 190 residues: ADP-ribosylation factor-like protein 6 (190 aa).

G2 carries N-myristoyl glycine lipidation. GTP-binding positions include 24-31 (GLDNSGKT), 69-73 (DMAGQ), and 130-133 (NKMD).

The protein belongs to the small GTPase superfamily. Arf family. As to expression, specifically expressed in ciliated cells.

The protein localises to the cytoplasm. The sequence is that of ADP-ribosylation factor-like protein 6 from Caenorhabditis elegans.